Consider the following 748-residue polypeptide: Putative transmembrane protein ORF88 (748 aa).

An N-terminal signal peptide occupies residues 1–20; it reads MIIMKSIILLLAWFLTKTQA. Residues 21–723 lie on the Extracellular side of the membrane; sequence NMLTESLYLS…LNLAPFKTLS (703 aa). N-linked (GlcNAc...) asparagine; by host glycans are attached at residues Asn-55, Asn-78, Asn-99, Asn-152, Asn-189, Asn-390, Asn-467, and Asn-499. The tract at residues 531-574 is disordered; it reads LTFDSPPPPPTTTQAPPPPPTTTQAPPPPPTTTQAPPPPIVINT. Over residues 535–570 the composition is skewed to pro residues; that stretch reads SPPPPPTTTQAPPPPPTTTQAPPPPPTTTQAPPPPI. 5 N-linked (GlcNAc...) asparagine; by host glycosylation sites follow: Asn-573, Asn-584, Asn-599, Asn-612, and Asn-617. The segment at 650–680 is disordered; the sequence is PSIGRAPIPPPDVPVEPPRSIPTTNAPSPEE. A compositionally biased stretch (pro residues) spans 656-669; sequence PIPPPDVPVEPPRS. Residues 724-744 form a helical membrane-spanning segment; sequence YAGIGVVSFALLFTILVVCLI. Topologically, residues 745–748 are cytoplasmic; that stretch reads KFSI.

It localises to the host membrane. The protein is Putative transmembrane protein ORF88 of Magallana gigas (Pacific oyster).